The following is a 246-amino-acid chain: Thaumatin-like protein 1a (246 aa).

The N-terminal stretch at 1 to 24 (MMKSQVASLLGLTLAILFFSGAHA) is a signal peptide. Disulfide bonds link Cys-33-Cys-245, Cys-81-Cys-91, Cys-96-Cys-103, Cys-151-Cys-234, Cys-156-Cys-217, Cys-164-Cys-180, Cys-184-Cys-193, and Cys-194-Cys-204.

The protein belongs to the thaumatin family.

Its subcellular location is the secreted. This Malus domestica (Apple) protein is Thaumatin-like protein 1a (TL1).